Consider the following 147-residue polypeptide: MVDQARARRLAKRISEIVATAIEYEVKDPRLRFVTITDAKVTGDLREATVYYTVMGETIDAEPDYDAAAAGLAKAKGVLRSKVGAGTGVKFTPSLAFVLDKVPDAAREMEELLARARAADAEVARVAAEARHAGEPDPYKTDRDDAE.

Positions 127-147 (AAEARHAGEPDPYKTDRDDAE) are disordered.

The protein belongs to the RbfA family. As to quaternary structure, monomer. Binds 30S ribosomal subunits, but not 50S ribosomal subunits or 70S ribosomes.

Its subcellular location is the cytoplasm. Its function is as follows. One of several proteins that assist in the late maturation steps of the functional core of the 30S ribosomal subunit. Associates with free 30S ribosomal subunits (but not with 30S subunits that are part of 70S ribosomes or polysomes). Required for efficient processing of 16S rRNA. May interact with the 5'-terminal helix region of 16S rRNA. In Nocardia farcinica (strain IFM 10152), this protein is Ribosome-binding factor A.